The chain runs to 116 residues: Large ribosomal subunit protein bL20c (116 aa).

This sequence belongs to the bacterial ribosomal protein bL20 family.

It is found in the plastid. Its subcellular location is the chloroplast. In terms of biological role, binds directly to 23S ribosomal RNA and is necessary for the in vitro assembly process of the 50S ribosomal subunit. It is not involved in the protein synthesizing functions of that subunit. The sequence is that of Large ribosomal subunit protein bL20c from Cyanidioschyzon merolae (strain NIES-3377 / 10D) (Unicellular red alga).